The chain runs to 36 residues: Potassium channel toxin alpha-KTx 2.7 (36 aa).

Intrachain disulfides connect cysteine 7–cysteine 29, cysteine 13–cysteine 34, and cysteine 17–cysteine 36.

This sequence belongs to the short scorpion toxin superfamily. Potassium channel inhibitor family. Alpha-KTx 02 subfamily. In terms of tissue distribution, expressed by the venom gland.

Its subcellular location is the secreted. Inhibitor of voltage-gated potassium channels (Kv). This protein is capable of displacing the binding of radio-labeled noxiustoxin (AC P08815) to rat brain synaptosomes with high affinity (about 100 pM). It is also capable of inhibiting transient potassium-currents (resembling I(A)-type currents), in cultured rat cerebellar granule cells. About 50% of the peak currents are reduced by application of a 1.5 uM solution of this toxin. Is lethal to mice (when less than 100 ug are injected). The sequence is that of Potassium channel toxin alpha-KTx 2.7 from Centruroides limpidus (Mexican scorpion).